Here is a 53-residue protein sequence, read N- to C-terminus: MKLFGMIFLIATVAFILLGVLLKLAAFFFVSILTLIAAIVLFTVLKKNQHNQT.

2 helical membrane-spanning segments follow: residues leucine 3–leucine 22 and alanine 26–leucine 45.

It is found in the cell membrane. This is an uncharacterized protein from Bacillus subtilis (strain 168).